The following is a 543-amino-acid chain: Thiamine transport system permease protein ThiP (543 aa).

12 consecutive transmembrane segments (helical) span residues 19 to 39 (VAGG…LLAL), 64 to 84 (FTIW…IPIA), 102 to 122 (LFAQ…TSIY), 142 to 162 (DIYG…PLAV), 205 to 225 (GMIG…LTLG), 250 to 270 (AVAL…ILRL), 300 to 320 (IIVI…VVVS), 343 to 363 (LALG…LVAA), 379 to 399 (GASL…FILL), 406 to 426 (FVMA…PFAV), 468 to 488 (GMAF…IALF), and 510 to 530 (FDAA…MMIA). The ABC transmembrane type-1 1 domain maps to 62 to 266 (ARFTIWQAVA…QLALTLLILL (205 aa)). The region spanning 339 to 530 (IATSLALGFS…VLCLALMMIA (192 aa)) is the ABC transmembrane type-1 2 domain.

The protein belongs to the binding-protein-dependent transport system permease family. CysTW subfamily. In terms of assembly, the complex is composed of two ATP-binding proteins (ThiQ), two transmembrane proteins (ThiP) and a solute-binding protein (ThiB).

It localises to the cell inner membrane. In terms of biological role, part of the ABC transporter complex ThiBPQ involved in thiamine import. Probably responsible for the translocation of the substrate across the membrane. The polypeptide is Thiamine transport system permease protein ThiP (thiP) (Brucella melitensis biotype 1 (strain ATCC 23456 / CCUG 17765 / NCTC 10094 / 16M)).